Here is a 506-residue protein sequence, read N- to C-terminus: uncharacterized protein (506 aa).

The protein belongs to the Mg-chelatase subunits D/I family. ComM subfamily.

This is an uncharacterized protein from Escherichia coli (strain K12).